The chain runs to 426 residues: GTPase Obg (426 aa).

An Obg domain is found at 1–158 (MFVDEVEIKV…RSIRLELKLV (158 aa)). The OBG-type G domain maps to 159 to 330 (ADVGLIGFPN…LIYYTGDLLK (172 aa)). GTP-binding positions include 165 to 172 (GFPNVGKS), 190 to 194 (FTTLK), 212 to 215 (DIPG), 282 to 285 (NKID), and 311 to 313 (SAA). The Mg(2+) site is built by serine 172 and threonine 192. Residues 349 to 426 (DFADEEENIV…IGPMEFEYME (78 aa)) enclose the OCT domain.

This sequence belongs to the TRAFAC class OBG-HflX-like GTPase superfamily. OBG GTPase family. In terms of assembly, monomer. The cofactor is Mg(2+).

It is found in the cytoplasm. An essential GTPase which binds GTP, GDP and possibly (p)ppGpp with moderate affinity, with high nucleotide exchange rates and a fairly low GTP hydrolysis rate. Plays a role in control of the cell cycle, stress response, ribosome biogenesis and in those bacteria that undergo differentiation, in morphogenesis control. The chain is GTPase Obg from Halothermothrix orenii (strain H 168 / OCM 544 / DSM 9562).